The sequence spans 853 residues: DNA mismatch repair protein MutS (853 aa).

614-621 contributes to the ATP binding site; sequence GPNMGGKS.

The protein belongs to the DNA mismatch repair MutS family.

This protein is involved in the repair of mismatches in DNA. It is possible that it carries out the mismatch recognition step. This protein has a weak ATPase activity. The polypeptide is DNA mismatch repair protein MutS (Escherichia coli O127:H6 (strain E2348/69 / EPEC)).